Here is a 203-residue protein sequence, read N- to C-terminus: Holliday junction branch migration complex subunit RuvA (203 aa).

The interval 1 to 63 is domain I; that stretch reads MIAFVSGPVA…EDSLTLYGFV (63 aa). Residues 64-141 form a domain II region; sequence DDDERQVFEL…GEPLGTGGPA (78 aa). The interval 141–145 is flexible linker; sequence AIGRA. The domain III stretch occupies residues 146-203; the sequence is VTTGWREQLHAALIGLGYATREADEAVAAVAPQAEAAGGTPQVGQLLKAALQTLNRTR.

The protein belongs to the RuvA family. As to quaternary structure, homotetramer. Forms an RuvA(8)-RuvB(12)-Holliday junction (HJ) complex. HJ DNA is sandwiched between 2 RuvA tetramers; dsDNA enters through RuvA and exits via RuvB. An RuvB hexamer assembles on each DNA strand where it exits the tetramer. Each RuvB hexamer is contacted by two RuvA subunits (via domain III) on 2 adjacent RuvB subunits; this complex drives branch migration. In the full resolvosome a probable DNA-RuvA(4)-RuvB(12)-RuvC(2) complex forms which resolves the HJ.

The protein localises to the cytoplasm. In terms of biological role, the RuvA-RuvB-RuvC complex processes Holliday junction (HJ) DNA during genetic recombination and DNA repair, while the RuvA-RuvB complex plays an important role in the rescue of blocked DNA replication forks via replication fork reversal (RFR). RuvA specifically binds to HJ cruciform DNA, conferring on it an open structure. The RuvB hexamer acts as an ATP-dependent pump, pulling dsDNA into and through the RuvAB complex. HJ branch migration allows RuvC to scan DNA until it finds its consensus sequence, where it cleaves and resolves the cruciform DNA. The chain is Holliday junction branch migration complex subunit RuvA from Streptomyces avermitilis (strain ATCC 31267 / DSM 46492 / JCM 5070 / NBRC 14893 / NCIMB 12804 / NRRL 8165 / MA-4680).